The chain runs to 784 residues: DNA repair and recombination protein RAD54-like (784 aa).

Residues 1–50 are disordered; that stretch reads MRRSLAPSQRGPLRPESRHSFTPPLLKKNKRSCQQELEREQELDRKRQSA. The segment at 2-9 is required for chromatin remodeling, strand pairing activities and coupling of ATPase activity; the sequence is RRSLAPSQ. At Ser-20 the chain carries Phosphoserine. Thr-22 is subject to Phosphothreonine. A compositionally biased stretch (basic and acidic residues) spans 36–47; it reads ELEREQELDRKR. A Helicase ATP-binding domain is found at 172-346; sequence EGKRGNFNGC…YSLVNFVNPE (175 aa). 185 to 192 provides a ligand contact to ATP; sequence DEMGLGKT. The DEGH box signature appears at 297–300; that stretch reads DEGH. Positions 503–660 constitute a Helicase C-terminal domain; that stretch reads LLDFMLAAIR…NNESAEKHFT (158 aa). The span at 747-756 shows a compositional bias: low complexity; it reads VASAEEAASE. The segment at 747–784 is disordered; it reads VASAEEAASEQPEEKPDRRKRPSTPLSDDSADEDFLGF. The span at 775 to 784 shows a compositional bias: acidic residues; that stretch reads DSADEDFLGF.

Belongs to the SNF2/RAD54 helicase family. As to quaternary structure, interacts (via N-terminus) with spn-A/Rad51.

It is found in the nucleus. Involved in mitotic DNA repair and meiotic recombination. Functions in the recombinational DNA repair pathway. Essential for interhomolog gene conversion (GC), but may have a less important role in intersister GC than spn-A/Rad51. In the presence of DNA, spn-A/Rad51 enhances the ATPase activity of okr/Rad54. This chain is DNA repair and recombination protein RAD54-like, found in Drosophila erecta (Fruit fly).